The sequence spans 351 residues: UPF0252 protein MJECL39 (351 aa).

2 helical membrane passes run Phe-58–Trp-78 and Ile-91–Val-111.

This sequence belongs to the UPF0252 family.

The protein resides in the cell membrane. This chain is UPF0252 protein MJECL39, found in Methanocaldococcus jannaschii (strain ATCC 43067 / DSM 2661 / JAL-1 / JCM 10045 / NBRC 100440) (Methanococcus jannaschii).